We begin with the raw amino-acid sequence, 332 residues long: 2,3-diketo-L-gulonate reductase (332 aa).

The active-site Proton donor is the His-44. NAD(+) is bound by residues 168–174 (ITMVDMS), 224–225 (WK), and 304–306 (GHE).

This sequence belongs to the LDH2/MDH2 oxidoreductase family. DlgD subfamily. Homodimer.

The protein localises to the cytoplasm. It carries out the reaction 3-dehydro-L-gulonate + NAD(+) = 2,3-dioxo-L-gulonate + NADH + H(+). The catalysed reaction is 3-dehydro-L-gulonate + NADP(+) = 2,3-dioxo-L-gulonate + NADPH + H(+). Catalyzes the reduction of 2,3-diketo-L-gulonate in the presence of NADH, to form 3-keto-L-gulonate. This chain is 2,3-diketo-L-gulonate reductase, found in Salmonella paratyphi C (strain RKS4594).